We begin with the raw amino-acid sequence, 503 residues long: ATP synthase subunit alpha (503 aa).

170–177 (GDRQTGKT) provides a ligand contact to ATP.

The protein belongs to the ATPase alpha/beta chains family. F-type ATPases have 2 components, CF(1) - the catalytic core - and CF(0) - the membrane proton channel. CF(1) has five subunits: alpha(3), beta(3), gamma(1), delta(1), epsilon(1). CF(0) has three main subunits: a(1), b(2) and c(9-12). The alpha and beta chains form an alternating ring which encloses part of the gamma chain. CF(1) is attached to CF(0) by a central stalk formed by the gamma and epsilon chains, while a peripheral stalk is formed by the delta and b chains.

The protein localises to the cell inner membrane. It carries out the reaction ATP + H2O + 4 H(+)(in) = ADP + phosphate + 5 H(+)(out). Produces ATP from ADP in the presence of a proton gradient across the membrane. The alpha chain is a regulatory subunit. This Geobacter sulfurreducens (strain ATCC 51573 / DSM 12127 / PCA) protein is ATP synthase subunit alpha.